Reading from the N-terminus, the 331-residue chain is Tetraacyldisaccharide 4'-kinase (331 aa).

58 to 65 contributes to the ATP binding site; the sequence is TVGGSGKT.

This sequence belongs to the LpxK family.

The catalysed reaction is a lipid A disaccharide + ATP = a lipid IVA + ADP + H(+). It participates in glycolipid biosynthesis; lipid IV(A) biosynthesis; lipid IV(A) from (3R)-3-hydroxytetradecanoyl-[acyl-carrier-protein] and UDP-N-acetyl-alpha-D-glucosamine: step 6/6. In terms of biological role, transfers the gamma-phosphate of ATP to the 4'-position of a tetraacyldisaccharide 1-phosphate intermediate (termed DS-1-P) to form tetraacyldisaccharide 1,4'-bis-phosphate (lipid IVA). This Shewanella denitrificans (strain OS217 / ATCC BAA-1090 / DSM 15013) protein is Tetraacyldisaccharide 4'-kinase.